We begin with the raw amino-acid sequence, 553 residues long: Hydroxylamine reductase (553 aa).

Cysteine 3, cysteine 6, cysteine 18, and cysteine 25 together coordinate [2Fe-2S] cluster. Hybrid [4Fe-2O-2S] cluster-binding residues include histidine 252, glutamate 276, cysteine 320, cysteine 408, cysteine 436, cysteine 461, glutamate 495, and lysine 497. A Cysteine persulfide modification is found at cysteine 408.

Belongs to the HCP family. [2Fe-2S] cluster serves as cofactor. Hybrid [4Fe-2O-2S] cluster is required as a cofactor.

Its subcellular location is the cytoplasm. It carries out the reaction A + NH4(+) + H2O = hydroxylamine + AH2 + H(+). Functionally, catalyzes the reduction of hydroxylamine to form NH(3) and H(2)O. The protein is Hydroxylamine reductase of Photobacterium phosphoreum.